The following is a 1342-amino-acid chain: DNA-directed RNA polymerase subunit beta (1342 aa).

Belongs to the RNA polymerase beta chain family. The RNAP catalytic core consists of 2 alpha, 1 beta, 1 beta' and 1 omega subunit. When a sigma factor is associated with the core the holoenzyme is formed, which can initiate transcription.

The catalysed reaction is RNA(n) + a ribonucleoside 5'-triphosphate = RNA(n+1) + diphosphate. Functionally, DNA-dependent RNA polymerase catalyzes the transcription of DNA into RNA using the four ribonucleoside triphosphates as substrates. This Vibrio campbellii (strain ATCC BAA-1116) protein is DNA-directed RNA polymerase subunit beta.